A 264-amino-acid chain; its full sequence is Thiazole synthase (264 aa).

Lys-106 acts as the Schiff-base intermediate with DXP in catalysis. Residues Gly-167, 193 to 194, and 215 to 216 each bind 1-deoxy-D-xylulose 5-phosphate; these read AG and NS.

It belongs to the ThiG family. Homotetramer. Forms heterodimers with either ThiH or ThiS.

The protein resides in the cytoplasm. The catalysed reaction is [ThiS sulfur-carrier protein]-C-terminal-Gly-aminoethanethioate + 2-iminoacetate + 1-deoxy-D-xylulose 5-phosphate = [ThiS sulfur-carrier protein]-C-terminal Gly-Gly + 2-[(2R,5Z)-2-carboxy-4-methylthiazol-5(2H)-ylidene]ethyl phosphate + 2 H2O + H(+). The protein operates within cofactor biosynthesis; thiamine diphosphate biosynthesis. Functionally, catalyzes the rearrangement of 1-deoxy-D-xylulose 5-phosphate (DXP) to produce the thiazole phosphate moiety of thiamine. Sulfur is provided by the thiocarboxylate moiety of the carrier protein ThiS. In vitro, sulfur can be provided by H(2)S. The polypeptide is Thiazole synthase (Azotobacter vinelandii (strain DJ / ATCC BAA-1303)).